Here is a 348-residue protein sequence, read N- to C-terminus: Oxidase ucsJ (348 aa).

This sequence belongs to the avfA family.

Its pathway is mycotoxin biosynthesis. In terms of biological role, oxidase; part of the gene cluster that mediates the biosynthesis of UCS1025A, a member of the pyrrolizidinone family that acts as a strong telomerase inhibitor and displays potent antibacterial and antitumor properties. These compounds share a hemiaminal-containing pyrrolizidinone core fused with a gamma-lactone, giving a furopyrrolizidine that is connected to a decalin fragment. The polyketide synthase module (PKS) of the PKS-NRPS ucsA is responsible for the synthesis of the polyketide backbone via the condensation of an acetyl-CoA starter unit with 6 malonyl-CoA units. The downstream nonribosomal peptide synthetase (NRPS) module then amidates the carboxyl end of the polyketide with a 2S,3S-methylproline derived from L-isoleucine by the 2-oxoglutarate-dependent dioxygenase ucsF which converts L-isoleucine to (4S,5S)-4-methylpyrroline-5-carboxylate that is further converted to 2S,3S-methylproline by the pyrroline-5-carboxylate reductase ucsG. Reductive release of the completed aminoacyl polyketide from the assembly line can form the 3-pyrrolin-2-one structure via an intramolecular Knoevenagel reaction. Because ucsA lacks a designated enoylreductase (ER) domain, the required activity is provided the enoyl reductase ucsL. This keto acyclic precursor is the substrate of the Diels-Alderase ucsH, that catalyzes the Diels-Alder cycloaddition. Oxidation of the 3S-methyl group to a carboxylate by the cytochrome P450 monooxygenase ucsK allows an oxa-Michael cyclization that might involve the reductase/dehydrogenase ucsI and which furnishes the furopyrrolizidine. The oxidase ucsJ likely plays a critical role in stereoselective reduction of the C5-C6 double bond to afford the required R-configured carboxylate group. Further enolization and oxidation at C5 by an unidentified enzyme affords the last intermediate that can undergo oxa-Michael cyclization to yield UCS1025A. In Acremonium sp, this protein is Oxidase ucsJ.